The chain runs to 282 residues: 2-dehydro-3-deoxyphosphooctonate aldolase (282 aa).

The protein belongs to the KdsA family.

The protein resides in the cytoplasm. The catalysed reaction is D-arabinose 5-phosphate + phosphoenolpyruvate + H2O = 3-deoxy-alpha-D-manno-2-octulosonate-8-phosphate + phosphate. The protein operates within carbohydrate biosynthesis; 3-deoxy-D-manno-octulosonate biosynthesis; 3-deoxy-D-manno-octulosonate from D-ribulose 5-phosphate: step 2/3. Its pathway is bacterial outer membrane biogenesis; lipopolysaccharide biosynthesis. In Shewanella woodyi (strain ATCC 51908 / MS32), this protein is 2-dehydro-3-deoxyphosphooctonate aldolase.